A 224-amino-acid polypeptide reads, in one-letter code: Phosphoribosylformylglycinamidine synthase subunit PurQ (224 aa).

The Glutamine amidotransferase type-1 domain occupies Arg-4 to Gly-224. Cys-87 (nucleophile) is an active-site residue. Residues His-195 and Glu-197 contribute to the active site.

Part of the FGAM synthase complex composed of 1 PurL, 1 PurQ and 2 PurS subunits.

It localises to the cytoplasm. It catalyses the reaction N(2)-formyl-N(1)-(5-phospho-beta-D-ribosyl)glycinamide + L-glutamine + ATP + H2O = 2-formamido-N(1)-(5-O-phospho-beta-D-ribosyl)acetamidine + L-glutamate + ADP + phosphate + H(+). It carries out the reaction L-glutamine + H2O = L-glutamate + NH4(+). It functions in the pathway purine metabolism; IMP biosynthesis via de novo pathway; 5-amino-1-(5-phospho-D-ribosyl)imidazole from N(2)-formyl-N(1)-(5-phospho-D-ribosyl)glycinamide: step 1/2. In terms of biological role, part of the phosphoribosylformylglycinamidine synthase complex involved in the purines biosynthetic pathway. Catalyzes the ATP-dependent conversion of formylglycinamide ribonucleotide (FGAR) and glutamine to yield formylglycinamidine ribonucleotide (FGAM) and glutamate. The FGAM synthase complex is composed of three subunits. PurQ produces an ammonia molecule by converting glutamine to glutamate. PurL transfers the ammonia molecule to FGAR to form FGAM in an ATP-dependent manner. PurS interacts with PurQ and PurL and is thought to assist in the transfer of the ammonia molecule from PurQ to PurL. This Mycobacterium bovis (strain ATCC BAA-935 / AF2122/97) protein is Phosphoribosylformylglycinamidine synthase subunit PurQ.